We begin with the raw amino-acid sequence, 232 residues long: 7-cyano-7-deazaguanine synthase (232 aa).

8–18 (FSGGQDSTTCL) provides a ligand contact to ATP. Zn(2+) contacts are provided by Cys187, Cys196, Cys199, and Cys202.

This sequence belongs to the QueC family. The cofactor is Zn(2+).

It catalyses the reaction 7-carboxy-7-deazaguanine + NH4(+) + ATP = 7-cyano-7-deazaguanine + ADP + phosphate + H2O + H(+). Its pathway is purine metabolism; 7-cyano-7-deazaguanine biosynthesis. Functionally, catalyzes the ATP-dependent conversion of 7-carboxy-7-deazaguanine (CDG) to 7-cyano-7-deazaguanine (preQ(0)). The protein is 7-cyano-7-deazaguanine synthase of Shewanella denitrificans (strain OS217 / ATCC BAA-1090 / DSM 15013).